The sequence spans 2640 residues: Collagen alpha-5(VI) chain (2640 aa).

The first 18 residues, 1 to 18 (MKLRLIAFVLILWTETLA), serve as a signal peptide directing secretion. Positions 19–1426 (DQSPGPGPEY…ACCCTFCKCP (1408 aa)) are nonhelical region. VWFA domains are found at residues 30 to 209 (DVVF…IKDV), 268 to 445 (DLIF…LKKI), 474 to 644 (DIYF…KNEI), 660 to 829 (DIMF…ESKL), 846 to 1023 (DIVF…QETL), 1037 to 1214 (DVIF…VREI), and 1226 to 1413 (DVVV…LGNI). 3 N-linked (GlcNAc...) asparagine glycosylation sites follow: N201, N292, and N614. Collagen-like domains are found at residues 1426 to 1478 (PGIP…GCPG), 1474 to 1524 (VGCP…DPGN), 1557 to 1614 (GQKG…GPEG), 1632 to 1689 (GSQG…GIPG), and 1706 to 1762 (GDPG…AGQP). The segment at 1427 to 1760 (GIPGPHGTRG…GRRGPKGTAG (334 aa)) is triple-helical region. Residues 1435-1761 (RGLQASKGSS…RRGPKGTAGQ (327 aa)) form a disordered region. Residues 1452-1464 (HRGEDGDPGRRGE) show a composition bias toward basic and acidic residues. The span at 1537-1567 (DGEKGFPGDPGDPGKDSNIKGQKGEKGERGR) shows a compositional bias: basic and acidic residues. Over residues 1597–1609 (PSGQAGNPGPQGT) the composition is skewed to polar residues. A compositionally biased stretch (low complexity) spans 1610 to 1622 (QGPEGLQGSQGSS). Positions 1649–1651 (RGD) match the Cell attachment site motif. Residues 1718–1727 (GIPGGPGPKG) show a composition bias toward gly residues. The span at 1740–1750 (RSGLQGSQGPP) shows a compositional bias: low complexity. The tract at residues 1761–2640 (QPIYSPCELI…NSKQDGEDAR (880 aa)) is nonhelical region. 2 VWFA domains span residues 1790 to 1970 (ELVF…KLRR) and 1996 to 2186 (DVAF…VKFL). 2 consecutive short sequence motifs (cell attachment site) follow at residues 2216–2218 (RGD) and 2259–2261 (RGD). The region spanning 2321–2516 (DVAFLIDASQ…PDLDYVIKFI (196 aa)) is the VWFA 10 domain. Residue N2541 is glycosylated (N-linked (GlcNAc...) asparagine). Residues 2617-2640 (DKEEPCSAETPAPVNSKQDGEDAR) are disordered.

This sequence belongs to the type VI collagen family. In terms of assembly, trimers composed of three different chains: alpha-1(VI), alpha-2(VI), and alpha-3(VI) or alpha-4(VI) or alpha-5(VI) or alpha-6(VI). In terms of processing, prolines at the third position of the tripeptide repeating unit (G-X-Y) are hydroxylated in some or all of the chains. In newborn, it is expressed in lung, heart, kidney, muscle, brain, intestine, skin, femur, sternum and calvaria. In adult, it is widely expressed and is detected in lung, heart, kidney, spleen, muscle, ovary, uterus, brain, skin, liver and sternum.

It localises to the secreted. The protein localises to the extracellular space. The protein resides in the extracellular matrix. In terms of biological role, collagen VI acts as a cell-binding protein. This is Collagen alpha-5(VI) chain (Col6a5) from Mus musculus (Mouse).